We begin with the raw amino-acid sequence, 556 residues long: MPKFDVSKSDLERLIGRSFSIEEWEDLVLYAKCELDDVWEENGKVYFKLDSKDTNRPDLWSAEGVARQIKWALGIEKGLPKYEVKKSNVTVYVDEKLKDIRPYGVYAIVEGLRLDEDSLSQMIQLQEKIALTFGRRRREVAIGIFDFDKIKPPIYYKAAEKTEKFAPLGYKEEMTLEEILEKHEKGREYGHLIKDKQFYPLLIDSEGNVLSMPPIINSEFTGRVTTDTKNVFIDVTGWKLEKVMLALNVMVTALAERGGKIRSVRVVYKDFEIETPDLTPKEFEVELDYIRKLSGLELNDGEIKELLEKMMYEVEISRGRAKLKYPAFRDDIMHARDILEDVLIAYGYNNIEPEEPKLAVQGRGDPFKDFEDAIRDLMVGFGLQEVMTFNLTNKEVQFKKMNIPEEEIVEIANPISQRWSALRKWILPSLMEFLSNNTHEEYPQRIFEVGLATLIDESRETKTVSEPKLAVALAGTGYTFTNAKEILDALMRHLGFEYEIEEVEHGSFIPGRAGKIIVNGRDIGIIGEVHPQVLENWNIEVPVVAFEIFLRPLYRH.

Residues 278 to 353 form the B5 domain; sequence LTPKEFEVEL…IAYGYNNIEP (76 aa). Positions 331, 337, 340, and 341 each coordinate Mg(2+).

The protein belongs to the phenylalanyl-tRNA synthetase beta subunit family. Type 2 subfamily. Tetramer of two alpha and two beta subunits. It depends on Mg(2+) as a cofactor.

It is found in the cytoplasm. The catalysed reaction is tRNA(Phe) + L-phenylalanine + ATP = L-phenylalanyl-tRNA(Phe) + AMP + diphosphate + H(+). The chain is Phenylalanine--tRNA ligase beta subunit from Pyrococcus horikoshii (strain ATCC 700860 / DSM 12428 / JCM 9974 / NBRC 100139 / OT-3).